The sequence spans 109 residues: NADH-quinone oxidoreductase subunit K (109 aa).

The next 3 helical transmembrane spans lie at 12-32, 40-60, and 72-92; these read LNHY…GLFM, ILMS…AFSV, and IIIL…LLIY.

It belongs to the complex I subunit 4L family. In terms of assembly, NDH-1 is composed of 14 different subunits. Subunits NuoA, H, J, K, L, M, N constitute the membrane sector of the complex.

The protein resides in the cell inner membrane. It catalyses the reaction a quinone + NADH + 5 H(+)(in) = a quinol + NAD(+) + 4 H(+)(out). Functionally, NDH-1 shuttles electrons from NADH, via FMN and iron-sulfur (Fe-S) centers, to quinones in the respiratory chain. The immediate electron acceptor for the enzyme in this species is believed to be ubiquinone. Couples the redox reaction to proton translocation (for every two electrons transferred, four hydrogen ions are translocated across the cytoplasmic membrane), and thus conserves the redox energy in a proton gradient. This is NADH-quinone oxidoreductase subunit K from Rickettsia bellii (strain RML369-C).